The following is a 126-amino-acid chain: Large ribosomal subunit protein bL12 (126 aa).

Belongs to the bacterial ribosomal protein bL12 family. Homodimer. Part of the ribosomal stalk of the 50S ribosomal subunit. Forms a multimeric L10(L12)X complex, where L10 forms an elongated spine to which 2 to 4 L12 dimers bind in a sequential fashion. Binds GTP-bound translation factors.

Its function is as follows. Forms part of the ribosomal stalk which helps the ribosome interact with GTP-bound translation factors. Is thus essential for accurate translation. The protein is Large ribosomal subunit protein bL12 of Methylobacterium sp. (strain 4-46).